A 292-amino-acid polypeptide reads, in one-letter code: 2-(5''-triphosphoribosyl)-3'-dephosphocoenzyme-A synthase (292 aa).

Belongs to the CitG/MdcB family.

The enzyme catalyses 3'-dephospho-CoA + ATP = 2'-(5''-triphospho-alpha-D-ribosyl)-3'-dephospho-CoA + adenine. In terms of biological role, catalyzes the formation of 2-(5''-triphosphoribosyl)-3'-dephosphocoenzyme-A, the precursor of the prosthetic group of the holo-acyl carrier protein (gamma chain) of citrate lyase, from ATP and dephospho-CoA. The protein is 2-(5''-triphosphoribosyl)-3'-dephosphocoenzyme-A synthase of Escherichia coli (strain ATCC 8739 / DSM 1576 / NBRC 3972 / NCIMB 8545 / WDCM 00012 / Crooks).